Consider the following 75-residue polypeptide: U14-hexatoxin-Mg1a (75 aa).

A signal peptide spans 1 to 19 (MKLTLFILIVFVVLANVYA). Residues 20–31 (AGISERNIIGGR) constitute a propeptide that is removed on maturation.

In terms of processing, contains 4 disulfide bonds. Expressed by the venom gland.

Its subcellular location is the secreted. No toxicity is observed upon intracranial injection into mice and intrathorax injection into crickets. This is U14-hexatoxin-Mg1a from Macrothele gigas (Japanese funnel web spider).